The sequence spans 405 residues: Tryptophan synthase beta chain (405 aa).

Lys95 is modified (N6-(pyridoxal phosphate)lysine).

It belongs to the TrpB family. Tetramer of two alpha and two beta chains. It depends on pyridoxal 5'-phosphate as a cofactor.

It catalyses the reaction (1S,2R)-1-C-(indol-3-yl)glycerol 3-phosphate + L-serine = D-glyceraldehyde 3-phosphate + L-tryptophan + H2O. The protein operates within amino-acid biosynthesis; L-tryptophan biosynthesis; L-tryptophan from chorismate: step 5/5. Its function is as follows. The beta subunit is responsible for the synthesis of L-tryptophan from indole and L-serine. The sequence is that of Tryptophan synthase beta chain from Pseudomonas putida (strain GB-1).